The sequence spans 474 residues: tRNA (guanine(37)-N(1))-methyltransferase (474 aa).

Residues histidine 234, 274-275, 303-304, and asparagine 345 contribute to the S-adenosyl-L-methionine site; these read DL and DA. Positions 452 to 464 are enriched in acidic residues; sequence EPEAQCESEEAEE. The disordered stretch occupies residues 452 to 474; that stretch reads EPEAQCESEEAEEPSSKRIKVDT. Residues 465-474 show a composition bias toward basic and acidic residues; it reads PSSKRIKVDT.

This sequence belongs to the class I-like SAM-binding methyltransferase superfamily. TRM5/TYW2 family. As to quaternary structure, monomer.

The protein resides in the mitochondrion matrix. The protein localises to the nucleus. Its subcellular location is the cytoplasm. It catalyses the reaction guanosine(37) in tRNA + S-adenosyl-L-methionine = N(1)-methylguanosine(37) in tRNA + S-adenosyl-L-homocysteine + H(+). Its function is as follows. Specifically methylates the N1 position of guanosine-37 in various cytoplasmic and mitochondrial tRNAs. Methylation is not dependent on the nature of the nucleoside 5' of the target nucleoside. This is the first step in the biosynthesis of wybutosine (yW), a modified base adjacent to the anticodon of tRNAs and required for accurate decoding. The protein is tRNA (guanine(37)-N(1))-methyltransferase of Caenorhabditis elegans.